Reading from the N-terminus, the 72-residue chain is Large ribosomal subunit protein bL31 (72 aa).

C16, C18, C38, and C41 together coordinate Zn(2+).

The protein belongs to the bacterial ribosomal protein bL31 family. Type A subfamily. As to quaternary structure, part of the 50S ribosomal subunit. The cofactor is Zn(2+).

Binds the 23S rRNA. The polypeptide is Large ribosomal subunit protein bL31 (Francisella tularensis subsp. holarctica (strain LVS)).